The primary structure comprises 184 residues: Latex serine proteinase inhibitor (184 aa).

Cysteines 45 and 89 form a disulfide. 2 N-linked (GlcNAc...) asparagine glycosylation sites follow: Asn84 and Asn90. An intrachain disulfide couples Cys142 to Cys153.

The protein belongs to the protease inhibitor I3 (leguminous Kunitz-type inhibitor) family.

The protein resides in the secreted. It is found in the extracellular space. In Carica papaya (Papaya), this protein is Latex serine proteinase inhibitor.